The chain runs to 187 residues: Methylamine dehydrogenase light chain (187 aa).

Residues 1 to 57 (MKKDTGFDSKIEKLARTTASKTGRRGFIGRLGGFLVGSALLPLLPVDRRSRLGGEVQ) constitute a signal peptide (tat-type signal). 6 disulfide bridges follow: cysteine 79/cysteine 144, cysteine 85/cysteine 117, cysteine 92/cysteine 177, cysteine 94/cysteine 142, cysteine 102/cysteine 133, and cysteine 134/cysteine 165. A Tryptophylquinone modification is found at tryptophan 113. Residues 113-164 (WVASCYNPGDQQTYLIAYRDCCGKQTCGRCNCVNTQGELPVYRPEFNNDIVW) constitute a cross-link (tryptophan tryptophylquinone (Trp-Trp)).

The protein belongs to the aromatic amine dehydrogenase light chain family. In terms of assembly, heterotetramer of two light and two heavy chains. Tryptophan tryptophylquinone residue is required as a cofactor. In terms of processing, predicted to be exported by the Tat system. The position of the signal peptide cleavage has not been experimentally proven. Tryptophan tryptophylquinone (TTQ) is formed by oxidation of the indole ring of a tryptophan to form tryptophylquinone followed by covalent cross-linking with another tryptophan residue.

The protein resides in the periplasm. The enzyme catalyses 2 oxidized [amicyanin] + methylamine + H2O = 2 reduced [amicyanin] + formaldehyde + NH4(+) + 2 H(+). It participates in one-carbon metabolism; methylamine degradation; formaldehyde from methylamine: step 1/1. Methylamine dehydrogenase carries out the oxidation of methylamine. Electrons are passed from methylamine dehydrogenase to amicyanin. The chain is Methylamine dehydrogenase light chain (mauA) from Methylophilus methylotrophus (Bacterium W3A1).